The primary structure comprises 88 residues: ATP synthase subunit c (88 aa).

Transmembrane regions (helical) follow at residues 10–30 and 68–88; these read ILAA…GPGI and GIYS…IRLL.

Belongs to the ATPase C chain family. As to quaternary structure, F-type ATPases have 2 components, F(1) - the catalytic core - and F(0) - the membrane proton channel. F(1) has five subunits: alpha(3), beta(3), gamma(1), delta(1), epsilon(1). F(0) has three main subunits: a(1), b(2) and c(10-14). The alpha and beta chains form an alternating ring which encloses part of the gamma chain. F(1) is attached to F(0) by a central stalk formed by the gamma and epsilon chains, while a peripheral stalk is formed by the delta and b chains.

It is found in the cell membrane. In terms of biological role, f(1)F(0) ATP synthase produces ATP from ADP in the presence of a proton or sodium gradient. F-type ATPases consist of two structural domains, F(1) containing the extramembraneous catalytic core and F(0) containing the membrane proton channel, linked together by a central stalk and a peripheral stalk. During catalysis, ATP synthesis in the catalytic domain of F(1) is coupled via a rotary mechanism of the central stalk subunits to proton translocation. Its function is as follows. Key component of the F(0) channel; it plays a direct role in translocation across the membrane. A homomeric c-ring of between 10-14 subunits forms the central stalk rotor element with the F(1) delta and epsilon subunits. This chain is ATP synthase subunit c, found in Alkaliphilus oremlandii (strain OhILAs) (Clostridium oremlandii (strain OhILAs)).